A 61-amino-acid chain; its full sequence is Small ribosomal subunit protein uS14 (61 aa).

The Zn(2+) site is built by cysteine 24, cysteine 27, cysteine 40, and cysteine 43.

This sequence belongs to the universal ribosomal protein uS14 family. Zinc-binding uS14 subfamily. Part of the 30S ribosomal subunit. Contacts proteins S3 and S10. Requires Zn(2+) as cofactor.

Functionally, binds 16S rRNA, required for the assembly of 30S particles and may also be responsible for determining the conformation of the 16S rRNA at the A site. This is Small ribosomal subunit protein uS14 from Nitratidesulfovibrio vulgaris (strain DSM 19637 / Miyazaki F) (Desulfovibrio vulgaris).